Consider the following 128-residue polypeptide: Large ribosomal subunit protein bL17 (128 aa).

The protein belongs to the bacterial ribosomal protein bL17 family. Part of the 50S ribosomal subunit. Contacts protein L32.

The chain is Large ribosomal subunit protein bL17 from Histophilus somni (strain 129Pt) (Haemophilus somnus).